The sequence spans 129 residues: Small ribosomal subunit protein uS11 (129 aa).

Belongs to the universal ribosomal protein uS11 family. Part of the 30S ribosomal subunit. Interacts with proteins S7 and S18. Binds to IF-3.

Functionally, located on the platform of the 30S subunit, it bridges several disparate RNA helices of the 16S rRNA. Forms part of the Shine-Dalgarno cleft in the 70S ribosome. The protein is Small ribosomal subunit protein uS11 of Bradyrhizobium diazoefficiens (strain JCM 10833 / BCRC 13528 / IAM 13628 / NBRC 14792 / USDA 110).